We begin with the raw amino-acid sequence, 547 residues long: Vacuolar fusion protein MON1 homolog B (547 aa).

Met1 bears the N-acetylmethionine mark. The span at Met1–Ala15 shows a compositional bias: low complexity. The interval Met1 to Arg106 is disordered. Phosphoserine occurs at positions 59 and 61.

This sequence belongs to the MON1/SAND family. As to quaternary structure, interacts with CCNT2; down-regulates CCNT2-mediated activation of viral promoters during herpes simplex virus 1/HHV-1 infection. Found in a complex with RMC1, CCZ1 MON1A and MON1B.

The chain is Vacuolar fusion protein MON1 homolog B (MON1B) from Homo sapiens (Human).